A 107-amino-acid chain; its full sequence is uncharacterized protein (107 aa).

Positions 23-64 (SASSSSSTRIPSGFASATSSKSNSSTKSSPSPINSFNNKTNN) are disordered. Residues 37 to 57 (ASATSSKSNSSTKSSPSPINS) show a composition bias toward low complexity. The helical transmembrane segment at 76–98 (LAFGIVEFMVFNGMISTITTTTF) threads the bilayer.

Its subcellular location is the membrane. This is an uncharacterized protein from Dictyostelium discoideum (Social amoeba).